The chain runs to 226 residues: Phosphoglycolate phosphatase (226 aa).

Residue aspartate 10 is the Nucleophile of the active site. 3 residues coordinate Mg(2+): aspartate 10, aspartate 12, and aspartate 175.

This sequence belongs to the HAD-like hydrolase superfamily. CbbY/CbbZ/Gph/YieH family. Mg(2+) is required as a cofactor.

It carries out the reaction 2-phosphoglycolate + H2O = glycolate + phosphate. It participates in organic acid metabolism; glycolate biosynthesis; glycolate from 2-phosphoglycolate: step 1/1. Functionally, specifically catalyzes the dephosphorylation of 2-phosphoglycolate. Is involved in the dissimilation of the intracellular 2-phosphoglycolate formed during the DNA repair of 3'-phosphoglycolate ends, a major class of DNA lesions induced by oxidative stress. The polypeptide is Phosphoglycolate phosphatase (Vibrio cholerae serotype O1 (strain ATCC 39315 / El Tor Inaba N16961)).